A 67-amino-acid polypeptide reads, in one-letter code: Large ribosomal subunit protein bL35 (67 aa).

Residues 1–32 show a composition bias toward basic residues; sequence MPKLKNHSGAKKRFAKTATGKYKRRKAGRKHL. Residues 1–54 form a disordered region; it reads MPKLKNHSGAKKRFAKTATGKYKRRKAGRKHLLTPQSGSRKREMRQTGIIKPES.

Belongs to the bacterial ribosomal protein bL35 family.

In Elusimicrobium minutum (strain Pei191), this protein is Large ribosomal subunit protein bL35.